We begin with the raw amino-acid sequence, 285 residues long: Ribosomal RNA small subunit methyltransferase A (285 aa).

The S-adenosyl-L-methionine site is built by asparagine 29, leucine 31, glycine 56, glutamate 77, aspartate 102, and asparagine 123.

It belongs to the class I-like SAM-binding methyltransferase superfamily. rRNA adenine N(6)-methyltransferase family. RsmA subfamily.

Its subcellular location is the cytoplasm. The enzyme catalyses adenosine(1518)/adenosine(1519) in 16S rRNA + 4 S-adenosyl-L-methionine = N(6)-dimethyladenosine(1518)/N(6)-dimethyladenosine(1519) in 16S rRNA + 4 S-adenosyl-L-homocysteine + 4 H(+). Specifically dimethylates two adjacent adenosines (A1518 and A1519) in the loop of a conserved hairpin near the 3'-end of 16S rRNA in the 30S particle. May play a critical role in biogenesis of 30S subunits. This chain is Ribosomal RNA small subunit methyltransferase A, found in Clostridium perfringens (strain ATCC 13124 / DSM 756 / JCM 1290 / NCIMB 6125 / NCTC 8237 / Type A).